We begin with the raw amino-acid sequence, 331 residues long: Adenosine deaminase (331 aa).

Zn(2+) is bound by residues H12 and H14. Substrate is bound by residues H14, D16, and G170. H197 serves as a coordination point for Zn(2+). The Proton donor role is filled by E200. D278 is a binding site for Zn(2+). A substrate-binding site is contributed by D279.

Belongs to the metallo-dependent hydrolases superfamily. Adenosine and AMP deaminases family. Adenosine deaminase subfamily. Requires Zn(2+) as cofactor.

It carries out the reaction adenosine + H2O + H(+) = inosine + NH4(+). The enzyme catalyses 2'-deoxyadenosine + H2O + H(+) = 2'-deoxyinosine + NH4(+). Its function is as follows. Catalyzes the hydrolytic deamination of adenosine and 2-deoxyadenosine. This Shewanella sp. (strain ANA-3) protein is Adenosine deaminase.